The chain runs to 1431 residues: 1-phosphatidylinositol 4,5-bisphosphate phosphodiesterase beta egl-8 (1431 aa).

One can recognise a PI-PLC X-box domain in the interval 340–491 (MDMDQPLCHY…LRKKILIKNK (152 aa)). The active site involves histidine 355. Ca(2+)-binding residues include asparagine 356, glutamate 385, and aspartate 387. The active site involves histidine 403. Ca(2+) is bound at residue glutamate 437. 2 residues coordinate substrate: lysine 489 and lysine 491. Disordered stretches follow at residues 510–601 (KLDE…MVPD) and 632–692 (RRQS…SGPS). Residues 543 to 556 (EEVDDDTSDDDDDP) are compositionally biased toward acidic residues. Low complexity-rich tracts occupy residues 572–586 (NTTS…ARSS), 652–661 (SSSSPATPSI), and 668–692 (ATSS…SGPS). The PI-PLC Y-box domain maps to 758–874 (LSSLVNYTHP…GYLLKPDFLR (117 aa)). Serine 787 and arginine 814 together coordinate substrate. Residues 877–1002 (DRTFDPFSES…SLRSDTNQSF (126 aa)) enclose the C2 domain. Disordered regions lie at residues 1072-1119 (QPPR…VAVD), 1150-1176 (DLRK…SSIA), and 1188-1216 (NNRR…SASG). Residues 1074–1113 (PRQNGSSADLLANNGQTGSARGDQTSSMASSTIRSPNEQP) show a composition bias toward polar residues. The stretch at 1135 to 1166 (KAFAKLLKRFQKELDDLRKKHQKQRDSIQKQQ) forms a coiled coil. Residues 1150–1162 (DLRKKHQKQRDSI) are compositionally biased toward basic and acidic residues. Over residues 1191–1200 (RSTKKEKGSR) the composition is skewed to basic residues. Residues 1204 to 1216 (TASVSSGCGSASG) are compositionally biased toward low complexity. 2 coiled-coil regions span residues 1288–1318 (DEEE…KNQM) and 1368–1402 (EKNL…QLEQ).

Requires Ca(2+) as cofactor. In terms of tissue distribution, expressed in most or all neurons with high expression in the head and tail ganglia and low expression in the motor neurons of the ventral cord. Expressed in the intestine (at protein level). In males, expressed in vas deferens, spicule protractor muscles, diagonal muscles and a male-specific neuron.

Its subcellular location is the perikaryon. The protein localises to the cell projection. The protein resides in the axon. It is found in the synapse. It localises to the cell junction. Its subcellular location is the adherens junction. The enzyme catalyses a 1,2-diacyl-sn-glycero-3-phospho-(1D-myo-inositol-4,5-bisphosphate) + H2O = 1D-myo-inositol 1,4,5-trisphosphate + a 1,2-diacyl-sn-glycerol + H(+). Its function is as follows. Mediates the production of the second messenger molecules diacylglycerol (DAG) and inositol 1,4,5-trisphosphate (IP3) which plays an important role in the regulation of intracellular signaling cascades. Required in the nervous system to modulate neuronal activity. Facilitates synaptic transmission at neuromuscular junctions by regulating the release of acetylcholine from the motor neurons and thus affecting locomotion. Plays a role in efficient egg laying and defecation. Involved in axon regeneration after injury. Plays a role in male mating behavior by regulating spicule insertion and sperm transfer. By triggering Ca(2+) transient via IP3-mediated activation of IPR3 receptor itr-1 in ASH sensory neurons, regulates avoidance behavior in response to nose touch. By activating tpa-1 via DAG production, required for the expression of antimicrobial peptide nlp-29 in response to fungal infection. During embryogenesis, may play a role in epidermal morphogenesis together with plc-1. In Caenorhabditis elegans, this protein is 1-phosphatidylinositol 4,5-bisphosphate phosphodiesterase beta egl-8.